The sequence spans 267 residues: Probable E3 ubiquitin-protein ligase dma1 (267 aa).

The 57-residue stretch at 60–116 (IYIGRYTERYNGGDVSAIVFRSKVVSRRHAQIFYENNTWYIQDMGSSSGTFLNHVRL) folds into the FHA domain. Residues 192–236 (CCICLMPVLPCQALFVAPCSHSYHYKCIRPTLNESHPYFSCFICR) form an RING-type zinc finger.

It belongs to the DMA1 family. Interacts with sid4.

It is found in the cytoplasm. Its subcellular location is the cytoskeleton. It localises to the microtubule organizing center. The protein localises to the spindle pole body. It catalyses the reaction S-ubiquitinyl-[E2 ubiquitin-conjugating enzyme]-L-cysteine + [acceptor protein]-L-lysine = [E2 ubiquitin-conjugating enzyme]-L-cysteine + N(6)-ubiquitinyl-[acceptor protein]-L-lysine.. Probable E3 ubiquitin-protein ligase which is a component of the spindle assembly checkpoint, required to prevent septum formation and premature exit from mitosis if spindle function is compromised. Inhibits the septation initiation netwok (SIN) during spindle checkpoint activation. The effect appears to be mediated through preventing the SIN activator, plo1 kinase, from localizing to the SPB. This chain is Probable E3 ubiquitin-protein ligase dma1 (dma1), found in Schizosaccharomyces pombe (strain 972 / ATCC 24843) (Fission yeast).